We begin with the raw amino-acid sequence, 254 residues long: Peroxisomal membrane protein 11-2 (254 aa).

Residues 1 to 113 are Cytoplasmic-facing; that stretch reads MVTAAGSPSS…YHPHPHVHPL (113 aa). A helical transmembrane segment spans residues 114–134; the sequence is LVLLAYGGQGVYNFLEQFAWL. The Lumenal portion of the chain corresponds to 135–227; sequence AKAGLLPARL…TVGDVTGRKG (93 aa). A helical membrane pass occupies residues 228 to 247; it reads LLGSSTLMASAGLLSALISV. At 248–254 the chain is on the cytoplasmic side; the sequence is HKNWNSC.

This sequence belongs to the peroxin-11 family.

Its subcellular location is the peroxisome membrane. Functionally, involved in peroxisomal proliferation. The chain is Peroxisomal membrane protein 11-2 (PEX11-2) from Oryza sativa subsp. japonica (Rice).